A 548-amino-acid polypeptide reads, in one-letter code: Acetylcholine receptor subunit alpha-type des-2 (548 aa).

The N-terminal stretch at 1–19 (MLIIIQSLLLATTASLCIA) is a signal peptide. At 21–239 (TPVPTQIRLV…LTLYLRRKPL (219 aa)) the chain is on the extracellular side. Asn52, Asn96, and Asn224 each carry an N-linked (GlcNAc...) asparagine glycan. A run of 3 helical transmembrane segments spans residues 240–260 (FYLVNLIIPTSIITLIAIVGF), 274–294 (VSLGITTLLSMSILMLMVSDQ), and 301–321 (FIPLIGWFILAMIIVISLGTV). A disordered region spans residues 422-460 (LIHLSPTAHQPDESISPSAPPVPSSSPLPPPLTPGPADD). The segment covering 439-455 (SAPPVPSSSPLPPPLTP) has biased composition (pro residues). A helical transmembrane segment spans residues 517–537 (FVIFVVAFLIITFGINFIGFI). Residues 538–548 (HWHQAGVEYGG) are Cytoplasmic-facing.

It belongs to the ligand-gated ion channel (TC 1.A.9) family. Acetylcholine receptor (TC 1.A.9.1) subfamily. In terms of assembly, the functional receptor is a heteromer of deg-3 and des-2. Interacts with ric-3; which is required for proper receptor folding.

It localises to the cell membrane. Subunit of the non-synaptic neuronal acetylcholine receptor (AChR), which may play a role in chemotaxis towards choline. After binding choline or acetylcholine, the AChR responds by an extensive change in conformation that affects all subunits and leads to opening of an ion-conducting channel across the plasma membrane. The protein is Acetylcholine receptor subunit alpha-type des-2 (des-2) of Caenorhabditis elegans.